We begin with the raw amino-acid sequence, 272 residues long: PILR alpha-associated neural protein (272 aa).

The first 27 residues, 1–27 (MWPAQLLSQLLPLWPLLLLPLSLPAQG), serve as a signal peptide directing secretion. Positions 25 to 93 (AQGSSHRSPP…PSGFEEGPPS (69 aa)) are disordered. Residues 28–174 (SSHRSPPAPA…FGGRGEGVDP (147 aa)) lie on the Extracellular side of the membrane. A glycan (O-linked (GalNAc...) threonine) is linked at Thr-136. The chain crosses the membrane as a helical span at residues 175–195 (QLYVTITISIIIVLVATGIIF). The Cytoplasmic portion of the chain corresponds to 196 to 272 (KFCWDRSQKR…KGAPAFQLNR (77 aa)). Residues 205 to 272 (RRRPSGQQGA…KGAPAFQLNR (68 aa)) form a disordered region. Positions 209-225 (SGQQGALRQEESQQPLT) are enriched in polar residues.

O-glycosylation at Thr-136 is essential for recognition by PILRA.

The protein resides in the membrane. In terms of biological role, acts as a ligand for PILRA in neuronal tissues, where it may be involved in immune regulation. The protein is PILR alpha-associated neural protein (Pianp) of Rattus norvegicus (Rat).